We begin with the raw amino-acid sequence, 291 residues long: 33 kDa chaperonin (291 aa).

Cystine bridges form between Cys-229-Cys-231 and Cys-262-Cys-265.

Belongs to the HSP33 family. In terms of processing, under oxidizing conditions two disulfide bonds are formed involving the reactive cysteines. Under reducing conditions zinc is bound to the reactive cysteines and the protein is inactive.

The protein resides in the cytoplasm. Redox regulated molecular chaperone. Protects both thermally unfolding and oxidatively damaged proteins from irreversible aggregation. Plays an important role in the bacterial defense system toward oxidative stress. The polypeptide is 33 kDa chaperonin (Vibrio cholerae serotype O1 (strain ATCC 39315 / El Tor Inaba N16961)).